Reading from the N-terminus, the 125-residue chain is U-scoloptoxin(05)-Er1a (125 aa).

The first 20 residues, Met1–Gly20, serve as a signal peptide directing secretion.

It belongs to the scoloptoxin-05 family. In terms of processing, contains 4 disulfide bonds. Expressed by the venom gland.

It localises to the secreted. The chain is U-scoloptoxin(05)-Er1a from Ethmostigmus rubripes (Giant centipede).